The chain runs to 152 residues: Lipoprotein signal peptidase (152 aa).

2 helical membrane passes run 55-75 (NKMW…VFYM) and 85-105 (LGIS…DRVF). Catalysis depends on residues Asp-111 and Asp-129. A helical membrane pass occupies residues 124-144 (VFNIADSALCIGVVLIIIQTL).

Belongs to the peptidase A8 family.

The protein localises to the cell membrane. The catalysed reaction is Release of signal peptides from bacterial membrane prolipoproteins. Hydrolyzes -Xaa-Yaa-Zaa-|-(S,diacylglyceryl)Cys-, in which Xaa is hydrophobic (preferably Leu), and Yaa (Ala or Ser) and Zaa (Gly or Ala) have small, neutral side chains.. Its pathway is protein modification; lipoprotein biosynthesis (signal peptide cleavage). Functionally, this protein specifically catalyzes the removal of signal peptides from prolipoproteins. The sequence is that of Lipoprotein signal peptidase from Bacillus cereus (strain G9842).